Here is a 281-residue protein sequence, read N- to C-terminus: Tumor necrosis factor ligand superfamily member 6 (281 aa).

Residues 1–80 (MQQPFNYPYP…LKKRGNHSTG (80 aa)) are Cytoplasmic-facing. Residues 20–71 (SSPWAPPGTVLPCPTSVPRRPGQRRPPPPPPPPPLPPPPPPPPLPPLPLPPL) are disordered. A compositionally biased stretch (pro residues) spans 43–70 (RRPPPPPPPPPLPPPPPPPPLPPLPLPP). A helical; Signal-anchor for type II membrane protein membrane pass occupies residues 81–102 (LCLLVMFFMVLVALVGLGLGMF). The Extracellular portion of the chain corresponds to 103–281 (QLFHLQKELA…SQTFFGLYKL (179 aa)). Residues 118–128 (TSQMHTASSLE) are compositionally biased toward polar residues. The tract at residues 118 to 142 (TSQMHTASSLEKQIGHPSPPPEKKE) is disordered. The THD domain maps to 145-281 (KVAHLTGKSN…SQTFFGLYKL (137 aa)). A glycan (N-linked (GlcNAc...) asparagine) is linked at asparagine 184. A disulfide bond links cysteine 202 and cysteine 233. N-linked (GlcNAc...) asparagine glycans are attached at residues asparagine 250 and asparagine 260.

This sequence belongs to the tumor necrosis factor family. As to quaternary structure, homotrimer. Interacts with ARHGAP9, BAIAP2L1, BTK, CACNB3, CACNB4, CRK, DLG2, DNMBP, DOCK4, EPS8L3, FGR, FYB1, FYN, HCK, ITK, ITSN2, KALRN, LYN, MACC1, MIA, MPP4, MYO15A, NCF1, NCK1, NCK2, NCKIPSD, OSTF1, PIK3R1, PSTPIP1, RIMBP3C, SAMSN1, SH3GL3, SH3PXD2B, SH3PXD2A, SH3RF2, SKAP2, SNX33, SNX9, SORBS3, SPTA1, SRC, SRGAP1, SRGAP2, SRGAP3, TEC, TJP3 and YES1. Post-translationally, the soluble form derives from the membrane form by proteolytic processing. The membrane-bound form undergoes two successive intramembrane proteolytic cleavages. The first one is processed by ADAM10 producing an N-terminal fragment, which lacks the receptor-binding extracellular domain. This ADAM10-processed FasL (FasL APL) remnant form is still membrane anchored and further processed by SPPL2A that liberates the FasL intracellular domain (FasL ICD). FasL shedding by ADAM10 is a prerequisite for subsequent intramembrane cleavage by SPPL2A in T-cells. In terms of processing, N-glycosylated. Glycosylation enhances apoptotic activity. Phosphorylated by FGR on tyrosine residues; this is required for ubiquitination and subsequent internalization. Post-translationally, monoubiquitinated.

It localises to the cell membrane. It is found in the cytoplasmic vesicle lumen. Its subcellular location is the lysosome lumen. The protein localises to the secreted. The protein resides in the nucleus. In terms of biological role, cytokine that binds to TNFRSF6/FAS, a receptor that transduces the apoptotic signal into cells. Involved in cytotoxic T-cell-mediated apoptosis, natural killer cell-mediated apoptosis and in T-cell development. Initiates fratricidal/suicidal activation-induced cell death (AICD) in antigen-activated T-cells contributing to the termination of immune responses. TNFRSF6/FAS-mediated apoptosis also has a role in the induction of peripheral tolerance. Binds to TNFRSF6B/DcR3, a decoy receptor that blocks apoptosis. Induces FAS-mediated activation of NF-kappa-B, initiating non-apoptotic signaling pathways. Can induce apoptosis but does not appear to be essential for this process. Its function is as follows. Cytoplasmic form induces gene transcription inhibition. This is Tumor necrosis factor ligand superfamily member 6 (FASLG) from Homo sapiens (Human).